The following is a 424-amino-acid chain: Elongation factor 1-alpha (424 aa).

One can recognise a tr-type G domain in the interval 5–223 (KPHMNLVIIG…NALQVPAKPV (219 aa)). Residues 14 to 21 (GHVDHGKS) are G1. 14 to 21 (GHVDHGKS) is a GTP binding site. Ser21 serves as a coordination point for Mg(2+). The interval 70 to 74 (GVTID) is G2. Residues 91–94 (DAPG) form a G3 region. Residues 91–95 (DAPGH) and 148–151 (NKMD) contribute to the GTP site. The interval 148 to 151 (NKMD) is G4. Residues 187–189 (SGY) are G5.

Belongs to the TRAFAC class translation factor GTPase superfamily. Classic translation factor GTPase family. EF-Tu/EF-1A subfamily.

It is found in the cytoplasm. The catalysed reaction is GTP + H2O = GDP + phosphate + H(+). In terms of biological role, GTP hydrolase that promotes the GTP-dependent binding of aminoacyl-tRNA to the A-site of ribosomes during protein biosynthesis. The chain is Elongation factor 1-alpha from Picrophilus torridus (strain ATCC 700027 / DSM 9790 / JCM 10055 / NBRC 100828 / KAW 2/3).